Reading from the N-terminus, the 222-residue chain is Probable RNA 2'-phosphotransferase (222 aa).

Belongs to the KptA/TPT1 family.

Its function is as follows. Removes the 2'-phosphate from RNA via an intermediate in which the phosphate is ADP-ribosylated by NAD followed by a presumed transesterification to release the RNA and generate ADP-ribose 1''-2''-cyclic phosphate (APPR&gt;P). May function as an ADP-ribosylase. The chain is Probable RNA 2'-phosphotransferase from Haloarcula marismortui (strain ATCC 43049 / DSM 3752 / JCM 8966 / VKM B-1809) (Halobacterium marismortui).